We begin with the raw amino-acid sequence, 300 residues long: UDP-N-acetylenolpyruvoylglucosamine reductase (300 aa).

Residues 22–190 enclose the FAD-binding PCMH-type domain; that stretch reads RVGGAAEWLA…LSARFRLQPG (169 aa). Arg-169 is an active-site residue. The active-site Proton donor is Ser-220. The active site involves Glu-290.

It belongs to the MurB family. It depends on FAD as a cofactor.

It localises to the cytoplasm. The catalysed reaction is UDP-N-acetyl-alpha-D-muramate + NADP(+) = UDP-N-acetyl-3-O-(1-carboxyvinyl)-alpha-D-glucosamine + NADPH + H(+). It functions in the pathway cell wall biogenesis; peptidoglycan biosynthesis. In terms of biological role, cell wall formation. The sequence is that of UDP-N-acetylenolpyruvoylglucosamine reductase from Synechococcus sp. (strain CC9605).